A 1070-amino-acid polypeptide reads, in one-letter code: Error-prone DNA polymerase (1070 aa).

This sequence belongs to the DNA polymerase type-C family. DnaE2 subfamily.

It is found in the cytoplasm. It catalyses the reaction DNA(n) + a 2'-deoxyribonucleoside 5'-triphosphate = DNA(n+1) + diphosphate. In terms of biological role, DNA polymerase involved in damage-induced mutagenesis and translesion synthesis (TLS). It is not the major replicative DNA polymerase. In Aromatoleum aromaticum (strain DSM 19018 / LMG 30748 / EbN1) (Azoarcus sp. (strain EbN1)), this protein is Error-prone DNA polymerase.